Here is a 106-residue protein sequence, read N- to C-terminus: 1-deoxy-D-xylulose 5-phosphate reductoisomerase (106 aa).

Asp-3 lines the Mn(2+) pocket. 1-deoxy-D-xylulose 5-phosphate is bound by residues Ser-4, Glu-5, Ser-29, His-52, Ser-65, Asn-70, Lys-71, and Glu-74. Glu-5 lines the Mn(2+) pocket. Glu-74 is a binding site for Mn(2+).

This sequence belongs to the DXR family. Requires Mn(2+) as cofactor. The cofactor is Mg(2+).

The protein resides in the plastid. The protein localises to the chloroplast stroma. The enzyme catalyses 2-C-methyl-D-erythritol 4-phosphate + NADP(+) = 1-deoxy-D-xylulose 5-phosphate + NADPH + H(+). It functions in the pathway isoprenoid biosynthesis; isopentenyl diphosphate biosynthesis via DXP pathway; isopentenyl diphosphate from 1-deoxy-D-xylulose 5-phosphate: step 1/6. In terms of biological role, enzyme of the plastid non-mevalonate pathway for isoprenoid biosynthesis that catalyzes the NADPH-dependent rearrangement and reduction of 1-deoxy-D-xylulose-5-phosphate (DXP) to 2-C-methyl-D-erythritol 4-phosphate (MEP). Required for chloroplast development. The protein is 1-deoxy-D-xylulose 5-phosphate reductoisomerase of Origanum vulgare (Wild marjoram).